Reading from the N-terminus, the 117-residue chain is Conotoxin vil14a (117 aa).

The signal sequence occupies residues 1-22 (MGFRVLVLVVMATTSALPFTFS). Residues 23–90 (EEPGRSPFRP…FAETPVGQKR (68 aa)) constitute a propeptide that is removed on maturation. The segment at 53–86 (RADGQPPDMRQPEMRRPEMRRPEVRQPEFAETPV) is disordered. Positions 62–80 (RQPEMRRPEMRRPEVRQPE) are enriched in basic and acidic residues. Intrachain disulfides connect C96-C116 and C100-C112.

It belongs to the conotoxin R superfamily. As to expression, expressed by the venom duct.

It is found in the secreted. The protein is Conotoxin vil14a of Conus villepinii (Villepin's cone).